The sequence spans 894 residues: Translation initiation factor IF-2 (894 aa).

The disordered stretch occupies residues Asp-52–Phe-301. The segment covering Ser-68–Val-82 has biased composition (polar residues). Basic and acidic residues predominate over residues Glu-107–Lys-154. Positions Leu-155 to Gln-168 are enriched in polar residues. Basic and acidic residues-rich tracts occupy residues Glu-171–Gly-214 and His-237–Arg-254. Over residues Ser-255–Ser-269 the composition is skewed to basic residues. Over residues Arg-270–Ala-283 the composition is skewed to basic and acidic residues. The region spanning Ser-393 to Lys-562 is the tr-type G domain. A G1 region spans residues Gly-402 to Thr-409. Gly-402 to Thr-409 contributes to the GTP binding site. Positions Gly-427 to His-431 are G2. The interval Asp-448–Gly-451 is G3. GTP is bound by residues Asp-448–His-452 and Asn-502–Asp-505. The G4 stretch occupies residues Asn-502 to Asp-505. The segment at Ser-538–Lys-540 is G5.

The protein belongs to the TRAFAC class translation factor GTPase superfamily. Classic translation factor GTPase family. IF-2 subfamily.

It is found in the cytoplasm. One of the essential components for the initiation of protein synthesis. Protects formylmethionyl-tRNA from spontaneous hydrolysis and promotes its binding to the 30S ribosomal subunits. Also involved in the hydrolysis of GTP during the formation of the 70S ribosomal complex. This is Translation initiation factor IF-2 from Sodalis glossinidius (strain morsitans).